The primary structure comprises 274 residues: RASVLHTSKKLTRAETIFSNMNYENSSEAEIIWDNVTQSNQSFDDFNRVVGGEDAARGQFPWQVLLHGEIAAFCGGSIVNEKWVVTAAHCIKPGVKITVVAGEHNTEKPEPTEQKRNVIRAIPYHGYNASINKYSHDIALLELDEPLELNSYVTPICIADREYTNIFLKFGYGYVSGWGRVFNRGRSASILQYLKVPLVDRATCLRSTKFTIYNHMFCAGYHEGGKDSCQGDSGGPHVTEVEGTSFLTGIISWGEECAMKGKYGIYTKVSRYEV.

Y23 is subject to Sulfotyrosine. An N-linked (GlcNAc...) asparagine glycan is attached at N25. Phosphoserine is present on S26. N-linked (GlcNAc...) asparagine glycosylation occurs at N35. O-linked (GalNAc...) threonine glycosylation occurs at T37. The N-linked (GlcNAc...) asparagine glycan is linked to N40. A Peptidase S1 domain is found at 49-274; sequence VVGGEDAARG…IYTKVSRYEV (226 aa). Cysteines 74 and 90 form a disulfide. The active-site Charge relay system is H89. Positions 103, 105, 110, and 113 each coordinate Ca(2+). Residue N128 is glycosylated (N-linked (GlcNAc...) asparagine). D137 functions as the Charge relay system in the catalytic mechanism. 2 cysteine pairs are disulfide-bonded: C204–C218 and C229–C257. S233 functions as the Charge relay system in the catalytic mechanism.

It belongs to the peptidase S1 family. In terms of assembly, heterodimer of a light chain and a heavy chain; disulfide-linked. Interacts (inactive and activated) with F11 (activated) in calcium-dependent manner. Interacts with SERPINC1. Post-translationally, activated by factor XIa, which excises the activation peptide. The propeptide can also be removed by snake venom protease. Activated by coagulation factor VIIa-tissue factor (F7-F3) complex in calcium-dependent manner.

Its subcellular location is the secreted. The catalysed reaction is Selective cleavage of Arg-|-Ile bond in factor X to form factor Xa.. Its function is as follows. Factor IX is a vitamin K-dependent plasma protein that participates in the intrinsic pathway of blood coagulation by converting factor X to its active form in the presence of Ca(2+) ions, phospholipids, and factor VIIIa. This chain is Coagulation factor IX (F9), found in Ovis aries (Sheep).